A 702-amino-acid polypeptide reads, in one-letter code: Ribosomal RNA large subunit methyltransferase K/L (702 aa).

Residues 43–154 enclose the THUMP domain; that stretch reads LIYQSLMWSR…KETASIALDL (112 aa).

This sequence belongs to the methyltransferase superfamily. RlmKL family.

It is found in the cytoplasm. It catalyses the reaction guanosine(2445) in 23S rRNA + S-adenosyl-L-methionine = N(2)-methylguanosine(2445) in 23S rRNA + S-adenosyl-L-homocysteine + H(+). It carries out the reaction guanosine(2069) in 23S rRNA + S-adenosyl-L-methionine = N(2)-methylguanosine(2069) in 23S rRNA + S-adenosyl-L-homocysteine + H(+). In terms of biological role, specifically methylates the guanine in position 2445 (m2G2445) and the guanine in position 2069 (m7G2069) of 23S rRNA. This chain is Ribosomal RNA large subunit methyltransferase K/L, found in Salmonella arizonae (strain ATCC BAA-731 / CDC346-86 / RSK2980).